Here is a 696-residue protein sequence, read N- to C-terminus: Interleukin-1 receptor accessory protein-like 1 (696 aa).

The first 18 residues, 1 to 18 (MKAPIPHLILLYATFTQS), serve as a signal peptide directing secretion. Residues 19 to 134 (LKVVTKRGSA…YCMKVSISLT (116 aa)) enclose the Ig-like C2-type 1 domain. Over 19–357 (LKVVTKRGSA…LLHKRELMYT (339 aa)) the chain is Extracellular. 2 disulfides stabilise this stretch: C31/C126 and C53/C118. 3 N-linked (GlcNAc...) asparagine glycosylation sites follow: N63, N122, and N138. 2 disulfides stabilise this stretch: C143–C185 and C164–C216. 2 consecutive Ig-like C2-type domains span residues 143 to 232 (CYNS…TELT) and 242 to 350 (PKLL…VLLH). N213, N264, and N331 each carry an N-linked (GlcNAc...) asparagine glycan. C267 and C334 are oxidised to a cystine. The helical transmembrane segment at 358 to 378 (VELAGGLGAILLLLVCLVTIY) threads the bilayer. Residues 379-696 (KCYKIEIMLF…RETSISSVIW (318 aa)) lie on the Cytoplasmic side of the membrane. The region spanning 403–559 (KDYDAYLSYT…KFWKRLQYEM (157 aa)) is the TIR domain. E491 is a catalytic residue. The tract at residues 549–644 (SKFWKRLQYE…TGTLPLTSIG (96 aa)) is interaction with NCS1. Positions 659–680 (GQRPQTKSSREQNPDEAHTNSA) are disordered. The segment covering 666–676 (SSREQNPDEAH) has biased composition (basic and acidic residues).

It belongs to the interleukin-1 receptor family. Homodimer. Interacts (calcium-independent) with NCS1. Interacts (via the first immunoglobilin domain) with PTPRD (via the second immunoglobilin domain); this interaction is PTPRD-splicing-dependent and induces pre- and post-synaptic differentiation of neurons and is required for IL1RAPL1-mediated synapse formation. As to expression, detected at low levels in heart, skeletal muscle, ovary, skin, amygdala, caudate nucleus, corpus callosum, hippocampus, substantia nigra and thalamus. Detected at very low levels in tonsil, prostate, testis, small intestine, placenta, colon and fetal liver.

It localises to the cell membrane. The protein resides in the cytoplasm. It is found in the cell projection. Its subcellular location is the axon. The protein localises to the dendrite. It catalyses the reaction NAD(+) + H2O = ADP-D-ribose + nicotinamide + H(+). Functionally, may regulate secretion and presynaptic differentiation through inhibition of the activity of N-type voltage-gated calcium channel. May activate the MAP kinase JNK. Plays a role in neurite outgrowth. During dendritic spine formation can bidirectionally induce pre- and post-synaptic differentiation of neurons by trans-synaptically binding to PTPRD. The polypeptide is Interleukin-1 receptor accessory protein-like 1 (IL1RAPL1) (Homo sapiens (Human)).